A 429-amino-acid polypeptide reads, in one-letter code: Ribosomal RNA small subunit methyltransferase B (429 aa).

Residues cysteine 254–lysine 260, aspartate 277, aspartate 303, and aspartate 322 contribute to the S-adenosyl-L-methionine site. Cysteine 375 serves as the catalytic Nucleophile.

Belongs to the class I-like SAM-binding methyltransferase superfamily. RsmB/NOP family.

The protein resides in the cytoplasm. It catalyses the reaction cytidine(967) in 16S rRNA + S-adenosyl-L-methionine = 5-methylcytidine(967) in 16S rRNA + S-adenosyl-L-homocysteine + H(+). Its function is as follows. Specifically methylates the cytosine at position 967 (m5C967) of 16S rRNA. This chain is Ribosomal RNA small subunit methyltransferase B, found in Escherichia coli (strain SE11).